The chain runs to 558 residues: Potassium-transporting ATPase potassium-binding subunit 2 (558 aa).

A run of 12 helical transmembrane segments spans residues M1–L21, I60–I80, V129–L149, F169–G189, W246–F266, I281–F301, F326–V346, L353–G373, V376–I396, I415–I435, I485–L505, and L523–P543.

Belongs to the KdpA family. The system is composed of three essential subunits: KdpA, KdpB and KdpC.

The protein localises to the cell membrane. Functionally, part of the high-affinity ATP-driven potassium transport (or Kdp) system, which catalyzes the hydrolysis of ATP coupled with the electrogenic transport of potassium into the cytoplasm. This subunit binds the extracellular potassium ions and delivers the ions to the membrane domain of KdpB through an intramembrane tunnel. The polypeptide is Potassium-transporting ATPase potassium-binding subunit 2 (Staphylococcus aureus (strain Mu50 / ATCC 700699)).